The following is a 309-amino-acid chain: Thiamine-monophosphate kinase (309 aa).

Mg(2+)-binding residues include D41 and D55. H62 serves as a coordination point for substrate. Positions 83, 128, and 215 each coordinate Mg(2+). 127–128 (GD) contacts ATP. S217 provides a ligand contact to ATP. D218 is a binding site for Mg(2+). Residue E268 coordinates substrate.

It belongs to the thiamine-monophosphate kinase family.

It catalyses the reaction thiamine phosphate + ATP = thiamine diphosphate + ADP. It participates in cofactor biosynthesis; thiamine diphosphate biosynthesis; thiamine diphosphate from thiamine phosphate: step 1/1. In terms of biological role, catalyzes the ATP-dependent phosphorylation of thiamine-monophosphate (TMP) to form thiamine-pyrophosphate (TPP), the active form of vitamin B1. The polypeptide is Thiamine-monophosphate kinase (Methanopyrus kandleri (strain AV19 / DSM 6324 / JCM 9639 / NBRC 100938)).